The sequence spans 418 residues: MTRRYLFTSESVTEGHPDKICDQISDTILDALLSQDPYSRVAAEVVVNTGLVLITGEITSKAQVNYVDLARQKIAEIGYTDSNNGFSANSCAVLVALDEQSPDISQGVTKAQERREQLSDDELDHIGAGDQGLMFGFACNETPELMPMPISLAHRIARRLAAVRKTGELPYLRPDGKTQVSVIYEDGKPVGIDTILISTQHTETLGQITDNAAIQKTIKDALWQAVVTPSFGDIEIKPDNNTKFLVNPTGKFVIGGPQGDSGLTGRKIIVDTYGGYSRHGGGAFSGKDPTKVDRSAAYACRHVAKNIVAAGLADKCEVQVSYAIGVARPVSIMIETFGTGKVSEEKLLEFVKEHFELRPAGIIQAYNLRHIPQERGRFYQDVAAYGHFGRTDLDLPWEKTDKVALLKDAFSQPAIVAG.

His-16 lines the ATP pocket. Mg(2+) is bound at residue Asp-18. Glu-44 lines the K(+) pocket. L-methionine-binding residues include Glu-57 and Gln-100. The interval 100-110 (QSPDISQGVTK) is flexible loop. ATP-binding positions include 175-177 (DGK), 251-252 (KF), Asp-260, 266-267 (RK), Ala-283, and Lys-287. Residue Asp-260 coordinates L-methionine. Lys-291 is an L-methionine binding site.

The protein belongs to the AdoMet synthase family. Homotetramer; dimer of dimers. Requires Mg(2+) as cofactor. K(+) is required as a cofactor.

It localises to the cytoplasm. It carries out the reaction L-methionine + ATP + H2O = S-adenosyl-L-methionine + phosphate + diphosphate. It participates in amino-acid biosynthesis; S-adenosyl-L-methionine biosynthesis; S-adenosyl-L-methionine from L-methionine: step 1/1. Catalyzes the formation of S-adenosylmethionine (AdoMet) from methionine and ATP. The overall synthetic reaction is composed of two sequential steps, AdoMet formation and the subsequent tripolyphosphate hydrolysis which occurs prior to release of AdoMet from the enzyme. This Gloeothece citriformis (strain PCC 7424) (Cyanothece sp. (strain PCC 7424)) protein is S-adenosylmethionine synthase.